Consider the following 261-residue polypeptide: MSGEIKWLRQLNLFFVAMSFFTRIPVPSWVVIDSDKLNKASRYFGLVGLLIGLICALVFWLAQLILPASIAILLAMVAGVLVTGAFHEDGLADTADGFGGGWTVEDKLRIMKDSRLGSYGALSLGLVLLLKWQLLVELALYSPMAAVSALVAGHTLSRVVASSLIFSEQYVRDDDTSKSKPIAQDQQLNDLFILIASGIFVLLWLNGVAAFVLFITLWLVRILLGGFFRKQIGGYTGDTLGAAQQISEVCCYLVILAVGLS.

Helical transmembrane passes span 12 to 32 (NLFFVAMSFFTRIPVPSWVVI), 46 to 66 (LVGLLIGLICALVFWLAQLIL), 67 to 87 (PASIAILLAMVAGVLVTGAFH), 120 to 140 (GALSLGLVLLLKWQLLVELAL), and 199 to 219 (IFVLLWLNGVAAFVLFITLWL).

Belongs to the CobS family. It depends on Mg(2+) as a cofactor.

The protein resides in the cell inner membrane. The enzyme catalyses alpha-ribazole + adenosylcob(III)inamide-GDP = adenosylcob(III)alamin + GMP + H(+). The catalysed reaction is alpha-ribazole 5'-phosphate + adenosylcob(III)inamide-GDP = adenosylcob(III)alamin 5'-phosphate + GMP + H(+). It participates in cofactor biosynthesis; adenosylcobalamin biosynthesis; adenosylcobalamin from cob(II)yrinate a,c-diamide: step 7/7. Its function is as follows. Joins adenosylcobinamide-GDP and alpha-ribazole to generate adenosylcobalamin (Ado-cobalamin). Also synthesizes adenosylcobalamin 5'-phosphate from adenosylcobinamide-GDP and alpha-ribazole 5'-phosphate. This is Adenosylcobinamide-GDP ribazoletransferase from Shewanella frigidimarina (strain NCIMB 400).